Consider the following 1225-residue polypeptide: ATP-dependent helicase/nuclease subunit A (1225 aa).

The region spanning 11–478 (AQWTDAQWKS…IDLSKNFRSR (468 aa)) is the UvrD-like helicase ATP-binding domain. 32–39 (AAAGSGKT) contributes to the ATP binding site. The UvrD-like helicase C-terminal domain occupies 479–790 (KEVLATTNYL…RMMTVHSSKG (312 aa)). A compositionally biased stretch (basic and acidic residues) spans 999–1014 (EKPSKQSVSELKRQLE). The interval 999 to 1018 (EKPSKQSVSELKRQLETEES) is disordered.

The protein belongs to the helicase family. AddA subfamily. In terms of assembly, heterodimer of AddA and AddB/RexB. It depends on Mg(2+) as a cofactor.

The catalysed reaction is Couples ATP hydrolysis with the unwinding of duplex DNA by translocating in the 3'-5' direction.. The enzyme catalyses ATP + H2O = ADP + phosphate + H(+). The heterodimer acts as both an ATP-dependent DNA helicase and an ATP-dependent, dual-direction single-stranded exonuclease. Recognizes the chi site generating a DNA molecule suitable for the initiation of homologous recombination. The AddA nuclease domain is required for chi fragment generation; this subunit has the helicase and 3' -&gt; 5' nuclease activities. The protein is ATP-dependent helicase/nuclease subunit A of Staphylococcus haemolyticus (strain JCSC1435).